The following is a 547-amino-acid chain: Apicoplast pyruvate carrier 1 (547 aa).

Positions 1-33 are disordered; that stretch reads MEPRAPPRLSVSSPRRESGATVPSHSPSTLLSC. The Cytoplasmic segment spans residues 1-45; it reads MEPRAPPRLSVSSPRRESGATVPSHSPSTLLSCASSETATEKRRR. Residues 21 to 33 show a composition bias toward polar residues; sequence TVPSHSPSTLLSC. Transmembrane regions (helical) follow at residues 46–66, 126–146, 167–187, 189–209, 212–232, 278–298, 345–365, 385–405, 417–437, 445–465, 467–487, and 515–535; these read WTGV…GTVY, AWVL…GGIA, VGMA…FGVI, GVGL…WFPE, GIVS…FSPL, LLAV…RVPA, ALVS…GLAI, ILTE…NAVG, GFQT…FFLP, LCYA…FSVF, SAVA…FIFG, and LMGL…ALSP.

The protein belongs to the major facilitator superfamily. Interacts with apicoplast pyruvate carrier 2.

The protein localises to the plastid. Its subcellular location is the apicoplast. It localises to the membrane. Its function is as follows. Along with apicoplast pyruvate carrier 2, forms apicoplast pyruvate carrier (APC) complex, which transports pyruvate into the apicoplast and may also transport amino acids like methionine, serine, glycine and tryptophan with low efficiency. Required for maintaining pyruvate-dependent metabolic activities in the apicoplast, such as synthesis of fatty acids, isopentenyl pyrophosphate (IPP), dimethylallyl pyrophosphate (DMAPP) and methylerythritol 4-phosphate (MEP). Required for maintaining the integrity of the apicoplast. Required for normal parasite growth. This chain is Apicoplast pyruvate carrier 1, found in Toxoplasma gondii.